Here is a 1038-residue protein sequence, read N- to C-terminus: Importin-7 (1038 aa).

Met1 bears the N-acetylmethionine mark. In terms of domain architecture, Importin N-terminal spans 22 to 101 (AERQLNEAHK…RENIVEAIIH (80 aa)). Positions 881-910 (EHENDSDDDEDAEDDDETEELGSDEDDIDE) are disordered. Positions 884 to 910 (NDSDDDEDAEDDDETEELGSDEDDIDE) are enriched in acidic residues. At Ser886 the chain carries Phosphoserine. At Thr898 the chain carries Phosphothreonine. 2 positions are modified to phosphoserine: Ser903 and Ser1020.

The protein belongs to the importin beta family. As to quaternary structure, forms a heterodimer with KPNB1. Interacts with histone H1. Interacts with H2A, H2B, H3 and H4 histones. Interacts with SNUPN and XPO1. Interacts with RPS7 and RPL5. Interacts with RPL23A (via BIB domain). Binds directly to nuclear pore complexes. Interacts with SMAD4 and NUP93; translocates SMAD4 to the nucleus through the NPC upon BMP7 stimulation resulting in activation of SMAD4 signaling. Interacts with phosphorylated SMAD2; the interaction facilitates translocation of SMAD2 to the nucleus. Interacts with SRP19. Interacts with RUNX2; the interaction inhibits RUNX2 nuclear translocation in osteoblasts. Interacts with HDAC6, DLX3 and KLF4; the interaction facilitates HDAC6, DLX3 and KLF4 nuclear translocation in dental papilla cells.

It is found in the cytoplasm. The protein resides in the nucleus. Its function is as follows. Functions in nuclear protein import, either by acting as autonomous nuclear transport receptor or as an adapter-like protein in association with the importin-beta subunit KPNB1. Acting autonomously is thought to serve itself as receptor for nuclear localization signals (NLS) and to promote translocation of import substrates through the nuclear pore complex (NPC) by an energy requiring, Ran-dependent mechanism. At the nucleoplasmic side of the NPC, Ran binds to importin, the importin/substrate complex dissociates and importin is re-exported from the nucleus to the cytoplasm where GTP hydrolysis releases Ran. Mediates autonomously the nuclear import of ribosomal proteins RPL23A, RPS7 and RPL5. In association with KPNB1 mediates the nuclear import of H1 histone and the Ran-binding site of IPO7 is not required but synergizes with that of KPNB1 in importin/substrate complex dissociation. Promotes odontoblast differentiation via promoting nuclear translocation of DLX3, KLF4, SMAD2, thereby facilitating the transcription of target genes that play a role in odontoblast differentiation. Facilitates BMP4-induced translocation of SMAD1 to the nucleus and recruitment to the MSX1 gene promoter, thereby promotes the expression of the odontogenic regulator MSX1 in dental mesenchymal cells. Also promotes odontoblast differentiation by facilitating the nuclear translocation of HDAC6 and subsequent repression of RUNX2 expression. Inhibits osteoblast differentiation by inhibiting nuclear translocation of RUNX2 and therefore inhibition of RUNX2 target gene transcription. In vitro, mediates nuclear import of H2A, H2B, H3 and H4 histones. The protein is Importin-7 (Ipo7) of Mus musculus (Mouse).